Here is a 1163-residue protein sequence, read N- to C-terminus: Hamartin (1163 aa).

A Glycyl lysine isopeptide (Lys-Gly) (interchain with G-Cter in ubiquitin) cross-link involves residue Lys30. A compositionally biased stretch (polar residues) spans Ser295 to Arg316. Disordered regions lie at residues Ser295–Pro337 and Cys353–Val594. Positions Ser321–Pro337 are enriched in low complexity. The segment covering Thr393–Pro402 has biased composition (pro residues). The tract at residues Gln403–Glu787 is mediates interaction with WDR45B. Residues Glu474–Ser487 show a composition bias toward basic and acidic residues. Ser487, Ser505, Ser511, Ser521, Ser595, and Ser598 each carry phosphoserine. The segment covering Leu512–Ser530 has biased composition (polar residues). Coiled coils occupy residues Arg721 to Lys919 and Glu970 to Asp994. Basic and acidic residues predominate over residues Asn1008–Thr1020. Residues Asn1008–Ser1163 are disordered. The span at Ser1029–Ser1046 shows a compositional bias: low complexity. Polar residues predominate over residues Glu1066–Ser1083. Residues Lys1088–Ser1099 show a composition bias toward basic and acidic residues. Ser1097 is subject to Phosphoserine. Residues Pro1131–Ser1146 are compositionally biased toward low complexity. The span at Asp1154 to Ser1163 shows a compositional bias: basic and acidic residues.

In terms of assembly, component of the TSC-TBC complex (also named Rhebulator complex), composed of 2 molecules of TSC1, 2 molecules of TSC2 and 1 molecule of TBC1D7. Probably forms a complex composed of chaperones HSP90 and HSP70, co-chaperones STIP1/HOP, CDC37, PPP5C, PTGES3/p23, TSC1 and client protein TSC2. Forms a complex composed of chaperones HSP90 and HSP70, co-chaperones CDC37, PPP5C, TSC1 and client protein TSC2, CDK4, AKT, RAF1 and NR3C1; this complex does not contain co-chaperones STIP1/HOP and PTGES3/p23. Forms a complex containing HSP90AA1, TSC1 and TSC2; TSC1 is required to recruit TCS2 to the complex. Interacts (via C-terminus) with the closed form of HSP90AA1 (via the middle domain and TPR repeat-binding motif). Interacts with DOCK7. Interacts with FBXW5. Interacts with WDR45B. Interacts with RPAP3 and URI1. Post-translationally, phosphorylation at Ser-505 does not affect interaction with TSC2. In terms of processing, 'Lys-63'-linked ubiquitinated at Lys-30 by PELI1; the ubiquitination promotes TSC1/TSC2 complex stability. Highly expressed in brain, spleen and kidney, followed by liver and heart.

It is found in the lysosome membrane. The protein localises to the cytoplasm. It localises to the cytosol. Non-catalytic component of the TSC-TBC complex, a multiprotein complex that acts as a negative regulator of the canonical mTORC1 complex, an evolutionarily conserved central nutrient sensor that stimulates anabolic reactions and macromolecule biosynthesis to promote cellular biomass generation and growth. The TSC-TBC complex acts as a GTPase-activating protein (GAP) for the small GTPase RHEB, a direct activator of the protein kinase activity of mTORC1. In absence of nutrients, the TSC-TBC complex inhibits mTORC1, thereby preventing phosphorylation of ribosomal protein S6 kinase (RPS6KB1 and RPS6KB2) and EIF4EBP1 (4E-BP1) by the mTORC1 signaling. The TSC-TBC complex is inactivated in response to nutrients, relieving inhibition of mTORC1. Within the TSC-TBC complex, TSC1 stabilizes TSC2 and prevents TSC2 self-aggregation. Involved in microtubule-mediated protein transport via its ability to regulate mTORC1 signaling. Also acts as a co-chaperone for HSP90AA1 facilitating HSP90AA1 chaperoning of protein clients such as kinases, TSC2 and glucocorticoid receptor NR3C1. Increases ATP binding to HSP90AA1 and inhibits HSP90AA1 ATPase activity. Competes with the activating co-chaperone AHSA1 for binding to HSP90AA1, thereby providing a reciprocal regulatory mechanism for chaperoning of client proteins. Recruits TSC2 to HSP90AA1 and stabilizes TSC2 by preventing the interaction between TSC2 and ubiquitin ligase HERC1. The protein is Hamartin of Rattus norvegicus (Rat).